We begin with the raw amino-acid sequence, 975 residues long: Glycine dehydrogenase (decarboxylating) (975 aa).

Lysine 723 bears the N6-(pyridoxal phosphate)lysine mark.

The protein belongs to the GcvP family. In terms of assembly, the glycine cleavage system is composed of four proteins: P, T, L and H. Pyridoxal 5'-phosphate is required as a cofactor.

It catalyses the reaction N(6)-[(R)-lipoyl]-L-lysyl-[glycine-cleavage complex H protein] + glycine + H(+) = N(6)-[(R)-S(8)-aminomethyldihydrolipoyl]-L-lysyl-[glycine-cleavage complex H protein] + CO2. In terms of biological role, the glycine cleavage system catalyzes the degradation of glycine. The P protein binds the alpha-amino group of glycine through its pyridoxal phosphate cofactor; CO(2) is released and the remaining methylamine moiety is then transferred to the lipoamide cofactor of the H protein. The chain is Glycine dehydrogenase (decarboxylating) from Burkholderia ambifaria (strain MC40-6).